Consider the following 536-residue polypeptide: Dual specificity calcium/calmodulin-dependent 3',5'-cyclic nucleotide phosphodiesterase 1B (536 aa).

The interval 1–20 is disordered; sequence MELSPRSPPEMLEESDCPSP. 2 positions are modified to phosphoserine: Ser-7 and Ser-15. 2 calmodulin-binding regions span residues 27-47 and 118-141; these read PSKKMWIKLRSLLRYMVKQLE and EKPKFRSIVHAVQAGIFVERMFRR. The 358-residue stretch at 146 to 503 folds into the PDEase domain; that stretch reads VGPTYSTAVL…QKWKERAASG (358 aa). His-223 (proton donor) is an active-site residue. 4 residues coordinate Zn(2+): His-227, His-263, Asp-264, and Asp-370. Asp-264 is a Mg(2+) binding site. Disordered stretches follow at residues 447–474 and 494–536; these read LADEDSKSKNQPSFQWRQPSLDVEVGDP and QKWK…GNLD. Residues 455 to 464 are compositionally biased toward polar residues; sequence KNQPSFQWRQ. Phosphoserine is present on residues Ser-466 and Ser-514.

This sequence belongs to the cyclic nucleotide phosphodiesterase family. PDE1 subfamily. In terms of assembly, homodimer. Requires Zn(2+) as cofactor. Mg(2+) is required as a cofactor.

It is found in the cytoplasm. It localises to the cytosol. It catalyses the reaction a nucleoside 3',5'-cyclic phosphate + H2O = a nucleoside 5'-phosphate + H(+). The catalysed reaction is 3',5'-cyclic GMP + H2O = GMP + H(+). It carries out the reaction 3',5'-cyclic AMP + H2O = AMP + H(+). With respect to regulation, type I PDE are activated by the binding of calmodulin in the presence of Ca(2+). Cyclic nucleotide phosphodiesterase with a dual specificity for the second messengers cAMP and cGMP, which are key regulators of many important physiological processes. Has a preference for cGMP as a substrate. This chain is Dual specificity calcium/calmodulin-dependent 3',5'-cyclic nucleotide phosphodiesterase 1B, found in Homo sapiens (Human).